A 118-amino-acid polypeptide reads, in one-letter code: Non-specific lipid-transfer protein 2A (118 aa).

Positions Met1–Ala26 are cleaved as a signal peptide. 4 disulfide bridges follow: Cys30–Cys77, Cys40–Cys54, Cys55–Cys100, and Cys75–Cys114.

Belongs to the plant LTP family.

In terms of biological role, plant non-specific lipid-transfer proteins transfer phospholipids as well as galactolipids across membranes. May play a role in wax or cutin deposition in the cell walls of expanding epidermal cells and certain secretory tissues. The protein is Non-specific lipid-transfer protein 2A (LTP2-A) of Oryza sativa subsp. japonica (Rice).